Consider the following 232-residue polypeptide: Enolase-phosphatase E1 (232 aa).

Belongs to the HAD-like hydrolase superfamily. MasA/MtnC family. Monomer. The cofactor is Mg(2+).

The enzyme catalyses 5-methylsulfanyl-2,3-dioxopentyl phosphate + H2O = 1,2-dihydroxy-5-(methylsulfanyl)pent-1-en-3-one + phosphate. The protein operates within amino-acid biosynthesis; L-methionine biosynthesis via salvage pathway; L-methionine from S-methyl-5-thio-alpha-D-ribose 1-phosphate: step 3/6. Its pathway is amino-acid biosynthesis; L-methionine biosynthesis via salvage pathway; L-methionine from S-methyl-5-thio-alpha-D-ribose 1-phosphate: step 4/6. In terms of biological role, bifunctional enzyme that catalyzes the enolization of 2,3-diketo-5-methylthiopentyl-1-phosphate (DK-MTP-1-P) into the intermediate 2-hydroxy-3-keto-5-methylthiopentenyl-1-phosphate (HK-MTPenyl-1-P), which is then dephosphorylated to form the acireductone 1,2-dihydroxy-3-keto-5-methylthiopentene (DHK-MTPene). The chain is Enolase-phosphatase E1 from Nocardia farcinica (strain IFM 10152).